We begin with the raw amino-acid sequence, 914 residues long: Coatomer subunit beta' (914 aa).

WD repeat units follow at residues 13–54, 55–94, 97–136, 140–180, 183–224, 227–266, and 352–390; these read SRSD…KDFE, VCDVPVRSARFVARKNWILTGSDDMQIRVFNYNTLEKVHS, AHSDYLRCIAVHPTQPLVLTSSDDMLIKLWNWEKMWACQR, GHTH…ANFT, GHEK…CVQT, GHAQNISAVCFHPELPIVLTGSEDGTVRIWHSGTYRLETC, and ACEIYPQTIAHNPNGRFVVVCGDGEYIIYTSMALRNKAF.

It belongs to the WD repeat COPB2 family. In terms of assembly, oligomeric complex that consists of at least the alpha, beta, beta', gamma, delta, epsilon and zeta subunits.

The protein resides in the cytoplasm. It localises to the golgi apparatus membrane. It is found in the cytoplasmic vesicle. Its subcellular location is the COPI-coated vesicle membrane. In terms of biological role, the coatomer is a cytosolic protein complex that binds to dilysine motifs and reversibly associates with Golgi non-clathrin-coated vesicles, which further mediate biosynthetic protein transport from the ER, via the Golgi up to the trans Golgi network. Coatomer complex is required for budding from Golgi membranes, and is essential for the retrograde Golgi-to-ER transport of dilysine-tagged proteins. This chain is Coatomer subunit beta', found in Drosophila melanogaster (Fruit fly).